A 21-amino-acid polypeptide reads, in one-letter code: Fibrinogen beta chain (21 aa).

Glutamine 1 is modified (pyrrolidone carboxylic acid). Residues glutamine 1–glutamate 11 are compositionally biased toward acidic residues. The interval glutamine 1–arginine 21 is disordered. Threonine 4 carries O-linked (GalNAc...) threonine glycosylation. Tyrosine 6 is modified (sulfotyrosine). Residues aspartate 12 to arginine 21 are compositionally biased toward basic and acidic residues.

As to quaternary structure, heterohexamer; disulfide linked. Contains 2 sets of 3 non-identical chains (alpha, beta and gamma). The 2 heterotrimers are in head to head conformation with the N-termini in a small central domain. In terms of processing, conversion of fibrinogen to fibrin is triggered by thrombin, which cleaves fibrinopeptides A and B from alpha and beta chains, and thus exposes the N-terminal polymerization sites responsible for the formation of the soft clot.

The protein localises to the secreted. Its function is as follows. Cleaved by the protease thrombin to yield monomers which, together with fibrinogen alpha (FGA) and fibrinogen gamma (FGG), polymerize to form an insoluble fibrin matrix. Fibrin has a major function in hemostasis as one of the primary components of blood clots. In addition, functions during the early stages of wound repair to stabilize the lesion and guide cell migration during re-epithelialization. Was originally thought to be essential for platelet aggregation, based on in vitro studies using anticoagulated blood. However subsequent studies have shown that it is not absolutely required for thrombus formation in vivo. Enhances expression of SELP in activated platelets. Maternal fibrinogen is essential for successful pregnancy. Fibrin deposition is also associated with infection, where it protects against IFNG-mediated hemorrhage. May also facilitate the antibacterial immune response via both innate and T-cell mediated pathways. The polypeptide is Fibrinogen beta chain (FGB) (Cervus elaphus (Red deer)).